The primary structure comprises 589 residues: Pyruvate kinase (589 aa).

R32 lines the substrate pocket. K(+) contacts are provided by N34, S36, D66, and T67. 34–37 (NFSH) is a binding site for ATP. Residues R73 and K157 each coordinate ATP. E223 lines the Mg(2+) pocket. 3 residues coordinate substrate: G246, D247, and T279. D247 contributes to the Mg(2+) binding site.

It belongs to the pyruvate kinase family. The protein in the C-terminal section; belongs to the PEP-utilizing enzyme family. As to quaternary structure, homotetramer. The cofactor is Mg(2+). Requires K(+) as cofactor.

The catalysed reaction is pyruvate + ATP = phosphoenolpyruvate + ADP + H(+). The protein operates within carbohydrate degradation; glycolysis; pyruvate from D-glyceraldehyde 3-phosphate: step 5/5. Strongly activated by glucose-6-phosphate, ribose-5-phosphate and fructose-6-phosphate. Weak activator AMP and weak inhibitor fructose-1,6-bisphosphate can act as strong inhibitors in the presence of strong activators. This is Pyruvate kinase (pyk) from Lactobacillus delbrueckii subsp. bulgaricus.